We begin with the raw amino-acid sequence, 130 residues long: MRHRKSGRHLSRTSAHRKAMFQNMAVSLFEHELIKTTLPKAKELRRVAEPLITLAKEDSVANRRLAFDRTRSKAAVGKLFNDLGKRYANRPGGYLRILKCGFRAGDNAPMAYVELVDRPVDGEALVGAAE.

It belongs to the bacterial ribosomal protein bL17 family. In terms of assembly, part of the 50S ribosomal subunit. Contacts protein L32.

This Azotobacter vinelandii (strain DJ / ATCC BAA-1303) protein is Large ribosomal subunit protein bL17.